A 480-amino-acid polypeptide reads, in one-letter code: UDP-glucose 6-dehydrogenase 4 (480 aa).

Residues 8 to 13 (GAGYVG), D33, R38, 86 to 90 (VNTPT), 127 to 128 (ST), and E161 contribute to the NAD(+) site. Substrate is bound by residues 157 to 161 (EFLAE), 216 to 223 (KLAANAFL), and 256 to 269 (RIGPKFLNASVGFG). C272 functions as the Nucleophile in the catalytic mechanism. NAD(+) is bound at residue 272 to 275 (CFQK). Residue 334 to 335 (FK) coordinates substrate. R342 serves as a coordination point for NAD(+). S393 bears the Phosphoserine mark. R447 provides a ligand contact to substrate.

It belongs to the UDP-glucose/GDP-mannose dehydrogenase family.

It carries out the reaction UDP-alpha-D-glucose + 2 NAD(+) + H2O = UDP-alpha-D-glucuronate + 2 NADH + 3 H(+). Its pathway is nucleotide-sugar biosynthesis; UDP-alpha-D-glucuronate biosynthesis; UDP-alpha-D-glucuronate from UDP-alpha-D-glucose: step 1/1. Involved in the biosynthesis of UDP-glucuronic acid (UDP-GlcA), providing nucleotide sugars for cell-wall polymers. The sequence is that of UDP-glucose 6-dehydrogenase 4 (UGD4) from Oryza sativa subsp. japonica (Rice).